A 216-amino-acid chain; its full sequence is Early E3 25 kDa glycoprotein (216 aa).

7 N-linked (GlcNAc...) asparagine; by host glycosylation sites follow: Asn25, Asn82, Asn97, Asn109, Asn142, Asn147, and Asn160.

In Canis lupus familiaris (Dog), this protein is Early E3 25 kDa glycoprotein.